The following is a 901-amino-acid chain: Inner capsid protein VP3 (901 aa).

Belongs to the turreted BTV-fold inner capsid family. Homodecamer; each decamer is made up of two conformers of VP2, called VP2A and VP2B. 12 homodecamers assemble to form an icosahedral capsid.

The protein localises to the virion. Its function is as follows. Inner capsid protein that self-assembles to form an icosahedral capsid with a T=2 symmetry, which consists of 120 copies of VP2, with channels at each of its five-fold vertices. This capsid constitutes the innermost concentric layer of the viral mature particle. In Bluetongue virus 13 (isolate USA) (BTV 13), this protein is Inner capsid protein VP3 (Segment-3).